Reading from the N-terminus, the 172-residue chain is MAKTSARSIKPGELNLKEKLVHINRTAKVVKGGKRFGFNAIIVVGDKEGHVGYGLGKANEVQDAIAKGVEDGKKNVIKVPIVKGTIPHQIIAKYGSAKVLMKPATPGTGLIAGGAVRAVLEMAGIHDVLTKSLGSSNPHNVVKAAIKGLQSMSDAYEVGERRSKSLKEVFES.

Residues 16-79 form the S5 DRBM domain; the sequence is LKEKLVHINR…EDGKKNVIKV (64 aa).

Belongs to the universal ribosomal protein uS5 family. Part of the 30S ribosomal subunit. Contacts proteins S4 and S8.

Functionally, with S4 and S12 plays an important role in translational accuracy. Located at the back of the 30S subunit body where it stabilizes the conformation of the head with respect to the body. The sequence is that of Small ribosomal subunit protein uS5 from Chlorobium phaeobacteroides (strain DSM 266 / SMG 266 / 2430).